Here is a 124-residue protein sequence, read N- to C-terminus: Small ribosomal subunit protein uS12 (124 aa).

Asp89 is subject to 3-methylthioaspartic acid.

This sequence belongs to the universal ribosomal protein uS12 family. In terms of assembly, part of the 30S ribosomal subunit. Contacts proteins S8 and S17. May interact with IF1 in the 30S initiation complex.

With S4 and S5 plays an important role in translational accuracy. Functionally, interacts with and stabilizes bases of the 16S rRNA that are involved in tRNA selection in the A site and with the mRNA backbone. Located at the interface of the 30S and 50S subunits, it traverses the body of the 30S subunit contacting proteins on the other side and probably holding the rRNA structure together. The combined cluster of proteins S8, S12 and S17 appears to hold together the shoulder and platform of the 30S subunit. This chain is Small ribosomal subunit protein uS12, found in Shewanella frigidimarina (strain NCIMB 400).